The sequence spans 735 residues: E3 ubiquitin-protein ligase SH3RF2 (735 aa).

The RING-type zinc-finger motif lies at 12–53 (CPVCFEKLDVTAKVLPCQHTFCKPCLQRIFKAHKELRCPECR). SH3 domains lie at 125 to 184 (DGVP…VIKQ) and 187 to 252 (QPPP…PNLS). 2 disordered regions span residues 260–301 (SKGH…GSGQ) and 335–373 (TSPSMLTQHGDRADFPASSAGQVSTSHPAPASPGHSTAM). Polar residues predominate over residues 273-289 (LMSSPSRGKATNTSTLR). Residues 373–466 (MVSVPSSQQH…RHPTVCTTWA (94 aa)) are interaction with PAK4. The SH3 3 domain occupies 383 to 444 (LSTNMFVALH…PSDYVIPVFS (62 aa)). Disordered stretches follow at residues 472-534 (VSSQ…PVQS), 612-637 (ETPIKSEPPPKPPASAPPSILVKPEN), and 649-735 (VRFQ…FPSK). The segment covering 523–534 (RKNGSLQRPVQS) has biased composition (polar residues). The segment covering 617 to 627 (SEPPPKPPASA) has biased composition (pro residues). Positions 647 to 652 (KTVRFQ) are interaction with PPP1CA. The residue at position 655 (S655) is a Phosphoserine. Positions 715 to 735 (FSKTTPPVSTASVSQTLFPSK) are enriched in polar residues.

The protein belongs to the SH3RF family. As to quaternary structure, interacts with FASLG and PPP1CA. Interacts with PAK4 and TNFRSF1A. Interacts with DLK1, MAP3K10, MAPK8IP1/JIP1, MAPK8IP2/JIP2 and MAPK8IP3/JIP3. Interacts with RAC1 (both active GTP- or inactive GDP-bound forms). Autoubiquitinated.

It is found in the nucleus. The catalysed reaction is S-ubiquitinyl-[E2 ubiquitin-conjugating enzyme]-L-cysteine + [acceptor protein]-L-lysine = [E2 ubiquitin-conjugating enzyme]-L-cysteine + N(6)-ubiquitinyl-[acceptor protein]-L-lysine.. Its pathway is protein modification; protein ubiquitination. In terms of biological role, has E3 ubiquitin-protein ligase activity. Acts as an anti-apoptotic regulator of the JNK pathway by ubiquitinating and promoting the degradation of SH3RF1, a scaffold protein that is required for pro-apoptotic JNK activation. Facilitates TNF-alpha-mediated recruitment of adapter proteins TRADD and RIPK1 to TNFRSF1A and regulates PAK4 protein stability via inhibition of its ubiquitin-mediated proteasomal degradation. Inhibits PPP1CA phosphatase activity. This Rattus norvegicus (Rat) protein is E3 ubiquitin-protein ligase SH3RF2 (Sh3rf2).